The following is a 356-amino-acid chain: L-lactate dehydrogenase A (356 aa).

NAD(+) is bound by residues 75-80 and R121; that span reads DALPDK. Substrate is bound by residues R128, N160, and R191. Position 160 (N160) interacts with NAD(+). The Proton acceptor role is filled by H215. Position 270 (T270) interacts with substrate.

This sequence belongs to the LDH/MDH superfamily. LDH family. As to quaternary structure, tetramer that arise from random association of LDH-A and LDH-B.

It catalyses the reaction (S)-lactate + NAD(+) = pyruvate + NADH + H(+). The protein operates within fermentation; pyruvate fermentation to lactate; (S)-lactate from pyruvate: step 1/1. The chain is L-lactate dehydrogenase A from Hordeum vulgare (Barley).